The primary structure comprises 253 residues: Non-homologous end joining protein Ku (253 aa).

Residues 9 to 192 (ISFGLVNIPV…EITEEELELA (184 aa)) form the Ku domain.

It belongs to the prokaryotic Ku family. As to quaternary structure, homodimer. Interacts with LigD.

With LigD forms a non-homologous end joining (NHEJ) DNA repair enzyme, which repairs dsDNA breaks with reduced fidelity. Binds linear dsDNA with 5'- and 3'- overhangs but not closed circular dsDNA nor ssDNA. Recruits and stimulates the ligase activity of LigD. This chain is Non-homologous end joining protein Ku, found in Archaeoglobus fulgidus (strain ATCC 49558 / DSM 4304 / JCM 9628 / NBRC 100126 / VC-16).